A 287-amino-acid chain; its full sequence is ADP-dependent (S)-NAD(P)H-hydrate dehydratase (287 aa).

The YjeF C-terminal domain maps to 7-283 (TTALVKKFIP…PEISTVMKPF (277 aa)). Positions 42 and 159 each coordinate (6S)-NADPHX. Residues 196–200 (KGSTD) and glycine 224 contribute to the AMP site. Aspartate 225 serves as a coordination point for (6S)-NADPHX.

Belongs to the NnrD/CARKD family. As to quaternary structure, homotetramer. Requires Mg(2+) as cofactor.

It catalyses the reaction (6S)-NADHX + ADP = AMP + phosphate + NADH + H(+). The enzyme catalyses (6S)-NADPHX + ADP = AMP + phosphate + NADPH + H(+). Its function is as follows. Catalyzes the dehydration of the S-form of NAD(P)HX at the expense of ADP, which is converted to AMP. Together with NAD(P)HX epimerase, which catalyzes the epimerization of the S- and R-forms, the enzyme allows the repair of both epimers of NAD(P)HX, a damaged form of NAD(P)H that is a result of enzymatic or heat-dependent hydration. This is ADP-dependent (S)-NAD(P)H-hydrate dehydratase from Nitrosopumilus maritimus (strain SCM1).